Consider the following 116-residue polypeptide: HVA22-like protein e (116 aa).

The next 3 membrane-spanning stretches (helical) occupy residues 12 to 32, 42 to 62, and 63 to 83; these read HSLA…VIAI, QWLA…ILQS, and LLEW…WLVL.

Belongs to the DP1 family. As to expression, predominantly expressed in stem.

It is found in the membrane. This Arabidopsis thaliana (Mouse-ear cress) protein is HVA22-like protein e (HVA22E).